The sequence spans 809 residues: Putative zinc metalloprotease TRE2 (809 aa).

2 stretches are compositionally biased toward polar residues: residues 1–12 (MRSSYQPVSTTN) and 20–30 (PTASSSHNLLM). Residues 1–66 (MRSSYQPVST…PSYEFDIEDP (66 aa)) form a disordered region. The Cytoplasmic portion of the chain corresponds to 1-125 (MRSSYQPVST…KIGNPFILRR (125 aa)). Positions 37 to 50 (SPPSSNDNSIETNI) are enriched in low complexity. The helical; Signal-anchor for type II membrane protein transmembrane segment at 126-146 (FFYIIFMSFIAYYVLSSGYLF) threads the bilayer. The Extracellular portion of the chain corresponds to 147 to 809 (NEKASGSKGM…VEETNDIGYK (663 aa)). The N-linked (GlcNAc...) asparagine glycan is linked to asparagine 228. The PA domain maps to 255 to 349 (SNGKLSKVSL…STGDASGLNW (95 aa)). N-linked (GlcNAc...) asparagine glycosylation is found at asparagine 669 and asparagine 736.

Belongs to the peptidase M28 family. M28B subfamily.

Its subcellular location is the membrane. This chain is Putative zinc metalloprotease TRE2 (TRE2), found in Saccharomyces cerevisiae (strain ATCC 204508 / S288c) (Baker's yeast).